A 64-amino-acid chain; its full sequence is Prokaryotic ubiquitin-like protein Pup (64 aa).

The span at 1–11 (MAQEQTKRTGG) shows a compositional bias: basic and acidic residues. A disordered region spans residues 1–37 (MAQEQTKRTGGGDEDDTPGADGAAGQERREKLAEDTD). The ARC ATPase binding stretch occupies residues 21–58 (DGAAGQERREKLAEDTDDLLDEIDDVLEENAEDFVRAY). A coiled-coil region spans residues 24 to 52 (AGQERREKLAEDTDDLLDEIDDVLEENAE). Glutamine 64 is subject to Deamidated glutamine. Residue glutamine 64 forms an Isoglutamyl lysine isopeptide (Gln-Lys) (interchain with K-? in acceptor proteins) linkage.

The protein belongs to the prokaryotic ubiquitin-like protein family. In terms of assembly, strongly interacts with the proteasome-associated ATPase ARC through a hydrophobic interface; the interacting region of Pup lies in its C-terminal half. There is one Pup binding site per ARC hexamer ring. Is modified by deamidation of its C-terminal glutamine to glutamate by the deamidase Dop, a prerequisite to the subsequent pupylation process.

It participates in protein degradation; proteasomal Pup-dependent pathway. Functionally, protein modifier that is covalently attached to lysine residues of substrate proteins, thereby targeting them for proteasomal degradation. The tagging system is termed pupylation. In Rhodococcus jostii (strain RHA1), this protein is Prokaryotic ubiquitin-like protein Pup.